The sequence spans 129 residues: UPF0325 protein YPTS_3127 (129 aa).

The protein belongs to the UPF0325 family.

The protein is UPF0325 protein YPTS_3127 of Yersinia pseudotuberculosis serotype IB (strain PB1/+).